Here is a 66-residue protein sequence, read N- to C-terminus: Large ribosomal subunit protein bL35 (66 aa).

Over residues 18–27 (ATGKIKSTQS) the composition is skewed to polar residues. The interval 18-41 (ATGKIKSTQSAKRHGMTKRSKRSI) is disordered. A compositionally biased stretch (basic residues) spans 28–41 (AKRHGMTKRSKRSI).

The protein belongs to the bacterial ribosomal protein bL35 family.

The polypeptide is Large ribosomal subunit protein bL35 (Ehrlichia ruminantium (strain Gardel)).